Consider the following 156-residue polypeptide: ATP synthase subunit b (156 aa).

The chain crosses the membrane as a helical span at residues 5 to 25 (LTMIGQAIAFFIFVVFCMKYV).

Belongs to the ATPase B chain family. In terms of assembly, F-type ATPases have 2 components, F(1) - the catalytic core - and F(0) - the membrane proton channel. F(1) has five subunits: alpha(3), beta(3), gamma(1), delta(1), epsilon(1). F(0) has three main subunits: a(1), b(2) and c(10-14). The alpha and beta chains form an alternating ring which encloses part of the gamma chain. F(1) is attached to F(0) by a central stalk formed by the gamma and epsilon chains, while a peripheral stalk is formed by the delta and b chains.

Its subcellular location is the cell inner membrane. Functionally, f(1)F(0) ATP synthase produces ATP from ADP in the presence of a proton or sodium gradient. F-type ATPases consist of two structural domains, F(1) containing the extramembraneous catalytic core and F(0) containing the membrane proton channel, linked together by a central stalk and a peripheral stalk. During catalysis, ATP synthesis in the catalytic domain of F(1) is coupled via a rotary mechanism of the central stalk subunits to proton translocation. In terms of biological role, component of the F(0) channel, it forms part of the peripheral stalk, linking F(1) to F(0). The sequence is that of ATP synthase subunit b from Hahella chejuensis (strain KCTC 2396).